The chain runs to 244 residues: Probable phosphatase CA_C0509 (244 aa).

The Zn(2+) site is built by histidine 8, histidine 10, histidine 16, histidine 41, glutamate 74, histidine 102, histidine 132, aspartate 193, and histidine 195.

Belongs to the PHP family. Zn(2+) serves as cofactor.

The polypeptide is Probable phosphatase CA_C0509 (Clostridium acetobutylicum (strain ATCC 824 / DSM 792 / JCM 1419 / IAM 19013 / LMG 5710 / NBRC 13948 / NRRL B-527 / VKM B-1787 / 2291 / W)).